An 80-amino-acid polypeptide reads, in one-letter code: Defensin-like protein 1 (80 aa).

The signal sequence occupies residues 1 to 29; that stretch reads MAKFASIIALLFAALVLFAAFEAPTMVEA. The residue at position 30 (Q30) is a Pyrrolidone carboxylic acid. 4 cysteine pairs are disulfide-bonded: C33–C80, C44–C65, C50–C74, and C54–C76.

It belongs to the DEFL family. In terms of assembly, forms oligomers in its native state.

Its subcellular location is the secreted. Functionally, possesses antifungal activity sensitive to inorganic cations. In Raphanus sativus (Radish), this protein is Defensin-like protein 1 (AFP1).